The chain runs to 15281 residues: Cyclosporin synthetase simA (15281 aa).

Residues 34–463 (SFAQGRLWFL…AVHVKTMPLT (430 aa)) are condensation 1. The tract at residues 513 to 918 (SYSELDHKSD…NSDQVRDAAV (406 aa)) is adenylation 1. The region spanning 1026–1100 (APRNEIEAVL…DLAATIQRGS (75 aa)) is the Carrier 1 domain. Ser1060 is subject to O-(pantetheine 4'-phosphoryl)serine. Positions 1118 to 1549 (SFAQGRLWFL…QTPIMTMPLT (432 aa)) are condensation 2. The tract at residues 1599 to 2004 (SYAELDQRSD…SSAGVHDAVV (406 aa)) is adenylation 2. Residues 2067–2251 (SWTSMYDGTL…LEELEEELLV (185 aa)) are methyltransferase (M) domain 1. The Carrier 2 domain maps to 2524–2598 (APRDSIEAII…DLAATIQQDT (75 aa)). At Ser2558 the chain carries O-(pantetheine 4'-phosphoryl)serine. The tract at residues 2616–3044 (SFAQGRLWFL…EPDMPVASMA (429 aa)) is condensation 3. Residues 3096-3498 (SYADLDRKSD…SHDLVTDAAV (403 aa)) form an adenylation 3 region. Residues 3562–3749 (SMYDGSLIKK…EDELLVDPAF (188 aa)) are methyltransferase (M) domain 2. The region spanning 4011–4085 (APRTEIERVL…DLVLIVQQGS (75 aa)) is the Carrier 3 domain. Ser4045 carries the post-translational modification O-(pantetheine 4'-phosphoryl)serine. The interval 4100 to 4530 (VPQSFAQGRL…GPDVPISTLP (431 aa)) is condensation 4. Residues 4582-4986 (SYAQLDRESD…FLNDGFVEDV (405 aa)) are adenylation 4. Residues 5052–5241 (TSMYDGTEID…ELLVDPAFFT (190 aa)) form a methyltransferase (M) domain 3 region. The Carrier 4 domain maps to 5503 to 5577 (PPRNSVEATV…DLAAVIQRNS (75 aa)). Ser5537 is modified (O-(pantetheine 4'-phosphoryl)serine). The condensation 5 stretch occupies residues 5592–6023 (VPQSFAQGRL…QPLTPLAVLP (432 aa)). Positions 6075–6478 (TYAQLDQQSD…SHNSVQDAAV (404 aa)) are adenylation 5. Residues 6545 to 6729 (WTSMYDGSEI…ELEANEEELL (185 aa)) are methyltransferase (M) domain 4. Positions 7000 to 7074 (APRNEIEAIL…DLAASIQRES (75 aa)) constitute a Carrier 5 domain. Ser7034 is subject to O-(pantetheine 4'-phosphoryl)serine. Residues 7092-7517 (SFAQGRLWFL…VLDQPLTPIS (426 aa)) form a condensation 6 region. An adenylation 6 region spans residues 7572–7976 (TYAQLDEQSD…DHKSVLAATV (405 aa)). The region spanning 8060–8134 (PPRDEVEAVL…DLADIIRRGS (75 aa)) is the Carrier 6 domain. At Ser8094 the chain carries O-(pantetheine 4'-phosphoryl)serine. Residues 8152-8582 (SFAQGRLWFL…PKQRLMAMPI (431 aa)) are condensation 7. Residues 8633–9038 (TYADLDGQSN…GHDLVHDAAV (406 aa)) form an adenylation 7 region. The methyltransferase (M) domain 5 stretch occupies residues 9111-9288 (PVNEMKEWLD…EESEEELLVD (178 aa)). Residues 9555 to 9629 (APRNDTEIVL…DLAASIEQGS (75 aa)) form the Carrier 7 domain. At Ser9589 the chain carries O-(pantetheine 4'-phosphoryl)serine. Residues 9647 to 10077 (SYAQGRLWFL…QVSISTMPLT (431 aa)) are condensation 8. Residues 10127–10529 (SYTSLDQKSE…GNKAIHDAAV (403 aa)) are adenylation 8. Residues 10588-10768 (RDFTSWTSMY…DQIRQEVARL (181 aa)) form a methyltransferase (M) domain 6 region. Residues 11052–11126 (APRNDIEAVL…DLADVVQTGS (75 aa)) enclose the Carrier 8 domain. Ser11086 carries the post-translational modification O-(pantetheine 4'-phosphoryl)serine. The tract at residues 11144–11567 (SFSQGRLWFL…HANLATLPLT (424 aa)) is condensation 9. An adenylation 9 region spans residues 11616–12019 (TYTELDERSS…RDPAISDSAV (404 aa)). One can recognise a Carrier 9 domain in the interval 12124 to 12198 (APRNDIETII…QLAASIQQGS (75 aa)). O-(pantetheine 4'-phosphoryl)serine is present on Ser12158. The interval 12216–12645 (SFAQGRLWFL…IAISTMPLVD (430 aa)) is condensation 10. The interval 12696 to 13096 (TYAELDQQSD…SDSSINDAVV (401 aa)) is adenylation 10. Residues 13162-13343 (YDGSLIPREE…EDDEEELLVD (182 aa)) are methyltransferase (M) domain 7. One can recognise a Carrier 10 domain in the interval 13620–13694 (APRTEIEVVL…DLAASILQGS (75 aa)). O-(pantetheine 4'-phosphoryl)serine is present on Ser13654. Positions 13710–14143 (EQSFAQGRLW…PQSPIATMPL (434 aa)) are condensation 11. The interval 14194–14598 (TYAELDRLSD…SENSVTDAAV (405 aa)) is adenylation 11. The 75-residue stretch at 14695–14769 (APRNETEAAI…SLAGKLEQQQ (75 aa)) folds into the Carrier 11 domain. Residue Ser14729 is modified to O-(pantetheine 4'-phosphoryl)serine. The segment at 14814–15158 (DMYPATQTQI…HPEAEIEGQQ (345 aa)) is condensation 12. Residues 15169–15224 (QARQANGHAPNGTNGTNGTNGTNGANGTNGTNGTNGTHANGINGSNGVNGRDSNVV) are disordered. Residues 15173–15211 (ANGHAPNGTNGTNGTNGTNGANGTNGTNGTNGTHANGIN) show a composition bias toward low complexity. Residues 15213–15224 (SNGVNGRDSNVV) show a composition bias toward polar residues.

Belongs to the NRP synthetase family. It depends on pantetheine 4'-phosphate as a cofactor.

Nonribosomal peptide synthetase; part of the gene cluster that mediates the biosynthesis of the cycloundecapeptide cyclosporin A (CsA), a compound with antifungal activity used as an immunosuppressant drug. Cyclosporin A contains three non-proteinogenic amino acids: D-alanine, alpha-amino butyric acid and the unusual amino acid (4R)-4-[(E)-2-butenyl]-4-methyl-l-threonine (Bmt). The nonribosomal peptide synthetase (NRPS) catalyzes the elongation and cyclization of the undecapeptide chain. SimA contains 11 modules responsible for sequential uptake of substrates and chain elongation. In addition to the core condensation-adenylation-thiolation (C-A-T) domains present in each module, seven modules contain an additional N-methylation (M) domain (modules 2, 3, 4, 5, 7, 8, and 10). The terminal C domain (C12 or Ct) is implicated in cyclization of the peptidyl chains to form CsA. The first module (A1) takes up D-Ala which is provided by the alanine racemase simB. The A2, A3, A8, and A10 domains have the same substrate-specific signature for recognition of leucine residues. The unusual amino acid (4R)-4-[(E)-2-butenyl]-4-methyl-l-threonine (Bmt) is recognized by the fifth module (A5). The A11 domain recognizes L-Ala. The PKS simG mediates the biosynthesis of 3R-hydroxyl-4R-methyl-6E-octenoic acid from acetyl coenzyme A (acetyl-CoA), malonyl-CoA, and S-adenosylmethionine, and 3R-hydroxyl-4R-methyl-6E-octenoic acid is then be repeatedly oxidized by simI to 3R-hydroxy-4R-methyl-2-keto-6E-octenoic acid. The latter is likely converted to Bmt through the action of the aminotransferase SimJ. The protein is Cyclosporin synthetase simA of Tolypocladium inflatum (Cyclosporin fungus).